The primary structure comprises 194 residues: RFKKIRRLGALPGLTSKRPRSGSDLKNQLRSGKRSQYRIRLEEKQKLRFHYGLTERQLLKYVHIAGKAKGSTGRVLLQLLEMRLDNILFRLGMASTIPGARQLVNHRHILVNGRIVDIPSYRCKPQDIITTKDKERSKVLIQNYIASSSHEELPNHLTIDPLQYKGLVNQIIDRKWVGLKINELLVVEYYSRQT.

The region spanning 82–143 is the S4 RNA-binding domain; that stretch reads MRLDNILFRL…KERSKVLIQN (62 aa).

Belongs to the universal ribosomal protein uS4 family. Part of the 30S ribosomal subunit. Contacts protein S5. The interaction surface between S4 and S5 is involved in control of translational fidelity.

It localises to the plastid. The protein localises to the chloroplast. One of the primary rRNA binding proteins, it binds directly to 16S rRNA where it nucleates assembly of the body of the 30S subunit. In terms of biological role, with S5 and S12 plays an important role in translational accuracy. This Trimezia steyermarkii (Steyermark's trimezia) protein is Small ribosomal subunit protein uS4c (rps4).